The primary structure comprises 217 residues: Ribosomal RNA small subunit methyltransferase G (217 aa).

S-adenosyl-L-methionine is bound by residues Gly-79, Leu-84, 102-104 (DST), 130-131 (VE), and Arg-144.

The protein belongs to the methyltransferase superfamily. RNA methyltransferase RsmG family.

Its subcellular location is the cytoplasm. Specifically methylates the N7 position of a guanine in 16S rRNA. This is Ribosomal RNA small subunit methyltransferase G from Chlorobaculum tepidum (strain ATCC 49652 / DSM 12025 / NBRC 103806 / TLS) (Chlorobium tepidum).